The following is a 186-amino-acid chain: MSVAETKKSVEQKMQKSIEAFKADLAKVRTGRAHVGLLDHVQVDYYGSMVPISQVANIGLGDARTITVQPWEKKMVGAVEKAIRDCDLGLNPATMGEVIRVPMPPLTEERRKELTKVVKGEAEGAKIAVRNLRRDANEQFKKLVKDKAISEDDERRGQDDVQKLTDKYVAEIDKMVAEKEKEIMTV.

The protein belongs to the RRF family.

The protein localises to the cytoplasm. In terms of biological role, responsible for the release of ribosomes from messenger RNA at the termination of protein biosynthesis. May increase the efficiency of translation by recycling ribosomes from one round of translation to another. This is Ribosome-recycling factor from Cupriavidus pinatubonensis (strain JMP 134 / LMG 1197) (Cupriavidus necator (strain JMP 134)).